We begin with the raw amino-acid sequence, 328 residues long: DNA-directed RNA polymerase subunit alpha (328 aa).

The tract at residues 1 to 232 (MHNSLAELIK…QHLAILVDLK (232 aa)) is alpha N-terminal domain (alpha-NTD). An alpha C-terminal domain (alpha-CTD) region spans residues 246-328 (FDPLLLHPVD…PPEGLKKLNQ (83 aa)).

The protein belongs to the RNA polymerase alpha chain family. As to quaternary structure, homodimer. The RNAP catalytic core consists of 2 alpha, 1 beta, 1 beta' and 1 omega subunit. When a sigma factor is associated with the core the holoenzyme is formed, which can initiate transcription.

The enzyme catalyses RNA(n) + a ribonucleoside 5'-triphosphate = RNA(n+1) + diphosphate. Its function is as follows. DNA-dependent RNA polymerase catalyzes the transcription of DNA into RNA using the four ribonucleoside triphosphates as substrates. The sequence is that of DNA-directed RNA polymerase subunit alpha from Methylococcus capsulatus (strain ATCC 33009 / NCIMB 11132 / Bath).